Consider the following 202-residue polypeptide: Cytochrome c biogenesis ATP-binding export protein CcmA (202 aa).

The ABC transporter domain occupies 3–200; it reads LAAENLSGER…EGTQELKMGA (198 aa). 35–42 serves as a coordination point for ATP; that stretch reads GPNGAGKS.

It belongs to the ABC transporter superfamily. CcmA exporter (TC 3.A.1.107) family. In terms of assembly, the complex is composed of two ATP-binding proteins (CcmA) and two transmembrane proteins (CcmB).

It localises to the cell inner membrane. The enzyme catalyses heme b(in) + ATP + H2O = heme b(out) + ADP + phosphate + H(+). Its function is as follows. Part of the ABC transporter complex CcmAB involved in the biogenesis of c-type cytochromes; once thought to export heme, this seems not to be the case, but its exact role is uncertain. Responsible for energy coupling to the transport system. This is Cytochrome c biogenesis ATP-binding export protein CcmA from Chelativorans sp. (strain BNC1).